The primary structure comprises 233 residues: Mediator of RNA polymerase II transcription subunit 7 (233 aa).

Residue lysine 185 forms a Glycyl lysine isopeptide (Lys-Gly) (interchain with G-Cter in SUMO1); alternate linkage. Residue lysine 185 forms a Glycyl lysine isopeptide (Lys-Gly) (interchain with G-Cter in SUMO2); alternate linkage. Residues 188 to 213 (PMDADDSNNCTGQSDQQRENSGHRRD) form a disordered region. Phosphoserine is present on serine 194. Residues 203–213 (QQRENSGHRRD) show a composition bias toward basic and acidic residues.

The protein belongs to the Mediator complex subunit 7 family. As to quaternary structure, component of the Mediator complex, which is composed of MED1, MED4, MED6, MED7, MED8, MED9, MED10, MED11, MED12, MED13, MED13L, MED14, MED15, MED16, MED17, MED18, MED19, MED20, MED21, MED22, MED23, MED24, MED25, MED26, MED27, MED29, MED30, MED31, CCNC, CDK8 and CDC2L6/CDK11. The MED12, MED13, CCNC and CDK8 subunits form a distinct module termed the CDK8 module. Mediator containing the CDK8 module is less active than Mediator lacking this module in supporting transcriptional activation. Individual preparations of the Mediator complex lacking one or more distinct subunits have been variously termed ARC, CRSP, DRIP, PC2, SMCC and TRAP.

Its subcellular location is the nucleus. Functionally, component of the Mediator complex, a coactivator involved in the regulated transcription of nearly all RNA polymerase II-dependent genes. Mediator functions as a bridge to convey information from gene-specific regulatory proteins to the basal RNA polymerase II transcription machinery. Mediator is recruited to promoters by direct interactions with regulatory proteins and serves as a scaffold for the assembly of a functional preinitiation complex with RNA polymerase II and the general transcription factors. The sequence is that of Mediator of RNA polymerase II transcription subunit 7 (MED7) from Sus scrofa (Pig).